A 209-amino-acid polypeptide reads, in one-letter code: Ras-like protein (209 aa).

A GTP-binding site is contributed by G10–S17. The Effector region signature appears at Y55–R63. Position 58 is a phosphothreonine (T58). GTP is bound by residues D79–Q83 and N140–D143. The residue at position 206 (C206) is a Cysteine methyl ester. The S-geranylgeranyl cysteine moiety is linked to residue C206. The propeptide at L207–I209 is removed in mature form.

The protein belongs to the small GTPase superfamily. Ras family. In terms of processing, phosphorylated in the presence of insulin.

It localises to the cell membrane. It carries out the reaction GTP + H2O = GDP + phosphate + H(+). Its activity is regulated as follows. Alternates between an inactive form bound to GDP and an active form bound to GTP. Activated by a guanine nucleotide-exchange factor (GEF) and inactivated by a GTPase-activating protein (GAP). Its function is as follows. This protein is activated by the insulin/insulin (insulin-like)-receptor system. This transition enables the ras protein to interact with the lectin-receptor/lectin complex, a process which ultimately lead to an initiation of an intra-cellular signal-transduction chain. The protein is Ras-like protein of Geodia cydonium (Sponge).